We begin with the raw amino-acid sequence, 147 residues long: Hemoglobin subunit gamma (147 aa).

A Globin domain is found at N3–H147. The heme b site is built by H64 and H93.

It belongs to the globin family. Heterotetramer of two alpha chains and two gamma chains in fetal hemoglobin (Hb F). As to expression, red blood cells.

In terms of biological role, gamma chains make up the fetal hemoglobin F, in combination with alpha chains. This chain is Hemoglobin subunit gamma (HBG1), found in Callithrix jacchus (White-tufted-ear marmoset).